Consider the following 209-residue polypeptide: Uracil phosphoribosyltransferase (209 aa).

5-phospho-alpha-D-ribose 1-diphosphate contacts are provided by residues Arg79, Arg104, and 131–139 (DPMLATGGS). Uracil is bound by residues Ile194 and 199 to 201 (GDA). Asp200 lines the 5-phospho-alpha-D-ribose 1-diphosphate pocket.

It belongs to the UPRTase family. It depends on Mg(2+) as a cofactor.

It carries out the reaction UMP + diphosphate = 5-phospho-alpha-D-ribose 1-diphosphate + uracil. Its pathway is pyrimidine metabolism; UMP biosynthesis via salvage pathway; UMP from uracil: step 1/1. With respect to regulation, allosterically activated by GTP. Functionally, catalyzes the conversion of uracil and 5-phospho-alpha-D-ribose 1-diphosphate (PRPP) to UMP and diphosphate. In Streptococcus salivarius, this protein is Uracil phosphoribosyltransferase.